The sequence spans 1643 residues: RNA replication protein (1643 aa).

Residues 59-224 (NPYANQTHTH…FHPYTTLEWL (166 aa)) enclose the Alphavirus-like MT domain. The disordered stretch occupies residues 686 to 711 (RPTASRKSCQPTPSVDKSGADSPPEK). A compositionally biased stretch (polar residues) spans 690–700 (SRKSCQPTPSV). The (+)RNA virus helicase ATP-binding domain maps to 828 to 996 (SDIKNNRTGK…IFSPYCEFYL (169 aa)). 868–875 (GCGGSGKS) is an ATP binding site. The 136-residue stretch at 997–1132 (NATHRNVKDL…TYRDEKTEVY (136 aa)) folds into the (+)RNA virus helicase C-terminal domain. The interval 1131–1155 (VYNSQPASAEPTEPEAPATHFPTAP) is disordered. Residues 1136–1155 (PASAEPTEPEAPATHFPTAP) are compositionally biased toward low complexity. The region spanning 1372 to 1479 (RPAHTNDFTA…DRVSIEKDSF (108 aa)) is the RdRp catalytic domain. Residues 1587 to 1620 (GSASPPHVFEKTADANTAGSSKTHKRNALKKKKQ) form a disordered region. Residues 1608 to 1620 (KTHKRNALKKKKQ) are compositionally biased toward basic residues.

This sequence belongs to the potexvirus/carlavirus RNA replication protein family.

It carries out the reaction RNA(n) + a ribonucleoside 5'-triphosphate = RNA(n+1) + diphosphate. It catalyses the reaction ATP + H2O = ADP + phosphate + H(+). In terms of biological role, RNA replication. The central part of this protein possibly functions as an ATP-binding helicase. The chain is RNA replication protein from Narcissus pseudonarcissus (Daffodil).